The primary structure comprises 828 residues: Periplasmic nitrate reductase (828 aa).

A signal peptide (tat-type signal) is located at residues 1 to 31 (MKLSRRSFMKANAVAAAAAAAGLSVPGVARA). The 4Fe-4S Mo/W bis-MGD-type domain maps to 39–95 (IKWDKAPCRFCGTGCGVLVGTQQGRVVACQGDPDAPVNRGLNCIKGYFLPKIMYGKD). Positions 46, 49, 53, and 81 each coordinate [4Fe-4S] cluster. Mo-bis(molybdopterin guanine dinucleotide) contacts are provided by residues K83, Q150, N175, C179, 212–219 (WGANMAEM), 243–247 (STYQH), 262–264 (QSD), M372, Q376, N482, 508–509 (SD), K531, D558, and 718–727 (TGRVLEHWHT). F794 lines the substrate pocket. The Mo-bis(molybdopterin guanine dinucleotide) site is built by N802 and K819.

It belongs to the prokaryotic molybdopterin-containing oxidoreductase family. NasA/NapA/NarB subfamily. In terms of assembly, component of the periplasmic nitrate reductase NapAB complex composed of NapA and NapB. Requires [4Fe-4S] cluster as cofactor. Mo-bis(molybdopterin guanine dinucleotide) serves as cofactor. Predicted to be exported by the Tat system. The position of the signal peptide cleavage has not been experimentally proven.

The protein localises to the periplasm. It catalyses the reaction 2 Fe(II)-[cytochrome] + nitrate + 2 H(+) = 2 Fe(III)-[cytochrome] + nitrite + H2O. Catalytic subunit of the periplasmic nitrate reductase complex NapAB. Receives electrons from NapB and catalyzes the reduction of nitrate to nitrite. This Escherichia coli O7:K1 (strain IAI39 / ExPEC) protein is Periplasmic nitrate reductase.